The primary structure comprises 78 residues: MASLIQVRDLLALRGRMEATQISHTLHAPQPMIDAMLNQLEIMGKAVRIPEEADGCLSGSCKSCPEGKACLREWWALR.

Positions 56, 61, 64, and 70 each coordinate iron-sulfur cluster.

This sequence belongs to the FeoC family.

Its function is as follows. May function as a transcriptional regulator that controls feoABC expression. The polypeptide is Probable [Fe-S]-dependent transcriptional repressor (Salmonella agona (strain SL483)).